A 157-amino-acid polypeptide reads, in one-letter code: MELTHFNEEGRARMVEVTEKQETVRTAVAAGEITMRPETLELILDKKVAKGDVLAVAQVAGIMAAKKTGDLIPMCHPLNLTGVDISFTIKVPDTIEAKAKVTCVGKTGVEMEALTAVSVTLLTIYDMVKAVEKGMVIKNIRLLEKTGGKSGDYRREE.

Substrate-binding positions include 74–76 (MCH) and 111–112 (ME). The active site involves Asp126.

It belongs to the MoaC family. As to quaternary structure, homohexamer; trimer of dimers.

The enzyme catalyses (8S)-3',8-cyclo-7,8-dihydroguanosine 5'-triphosphate = cyclic pyranopterin phosphate + diphosphate. Its pathway is cofactor biosynthesis; molybdopterin biosynthesis. Catalyzes the conversion of (8S)-3',8-cyclo-7,8-dihydroguanosine 5'-triphosphate to cyclic pyranopterin monophosphate (cPMP). The chain is Cyclic pyranopterin monophosphate synthase from Carboxydothermus hydrogenoformans (strain ATCC BAA-161 / DSM 6008 / Z-2901).